The following is an 89-amino-acid chain: Small ribosomal subunit protein uS15 (89 aa).

This sequence belongs to the universal ribosomal protein uS15 family. In terms of assembly, part of the 30S ribosomal subunit. Forms a bridge to the 50S subunit in the 70S ribosome, contacting the 23S rRNA.

Its function is as follows. One of the primary rRNA binding proteins, it binds directly to 16S rRNA where it helps nucleate assembly of the platform of the 30S subunit by binding and bridging several RNA helices of the 16S rRNA. Forms an intersubunit bridge (bridge B4) with the 23S rRNA of the 50S subunit in the ribosome. The sequence is that of Small ribosomal subunit protein uS15 from Frankia casuarinae (strain DSM 45818 / CECT 9043 / HFP020203 / CcI3).